The sequence spans 244 residues: Monothiol glutaredoxin-4 (244 aa).

Residues 3–110 (VVEIKSQDQF…FVKSLEILSN (108 aa)) enclose the Thioredoxin domain. The tract at residues 116–143 (ANNAKGPKSTSDEESSGSSDDEEDETEE) is disordered. Acidic residues predominate over residues 127 to 143 (DEESSGSSDDEEDETEE). Residues 146–244 (NARLVKLVQA…DPEYFQHALQ (99 aa)) form the Glutaredoxin domain. Lysine 163 contacts glutathione. Cysteine 171 is a [2Fe-2S] cluster binding site. Residues arginine 200, phenylalanine 212, and 225–226 (LD) each bind glutathione.

Belongs to the glutaredoxin family. Monothiol subfamily. Homodimer. Heterodimer with FRA2.

Monothiol glutaredoxin involved in the biogenesis of iron-sulfur clusters. Binds one iron-sulfur cluster per dimer. The iron-sulfur cluster is bound between subunits, and is complexed by a bound glutathione and a cysteine residue from each subunit. The protein is Monothiol glutaredoxin-4 (GRX4) of Saccharomyces cerevisiae (strain ATCC 204508 / S288c) (Baker's yeast).